A 453-amino-acid chain; its full sequence is Vitamin D3 receptor A (453 aa).

The nuclear receptor DNA-binding region spans 53–128 (PRICGVCGDK…IGMMKEFILT (76 aa)). C56, C59, C73, C76, C92, C98, C108, and C111 together coordinate Zn(2+). 2 NR C4-type zinc fingers span residues 56-76 (CGVCGDKATGFHFNAMTCEGC) and 92-111 (CPFNGNCTITKDNRRHCQAC). Residues 129-158 (DEEVQRKKDLIMKRKEEEAAREARKPRLSD) form a hinge region. The NR LBD domain occupies 159–449 (EQMQIINSLV…LTPLVLEVFG (291 aa)). Calcitriol-binding residues include Y175 and S265. Residues 274–292 (KMIPGFRDLTAEDQIALLK) form an interaction with coactivator LXXLL motif region. Positions 302, 306, 333, and 423 each coordinate calcitriol. Residues 442-450 (PLVLEVFGS) carry the 9aaTAD motif.

It belongs to the nuclear hormone receptor family. NR1 subfamily. As to quaternary structure, homodimer in the absence of bound vitamin D3. Heterodimer with RXRA after vitamin D3 binding. Interacts with ncoa1 and possibly other coactivators, leading to a strong increase of transcription of target genes. As to expression, detected in embryo 24 to 48 hours after fertilization and in gastrula.

The protein resides in the nucleus. Its subcellular location is the cytoplasm. Its function is as follows. Nuclear receptor for calcitriol, the active form of vitamin D3 which mediates the action of this vitamin on cells. Enters the nucleus upon vitamin D3 binding where it forms heterodimers with the retinoid X receptor/RXR. The VDR-RXR heterodimers bind to specific response elements on DNA and activate the transcription of vitamin D3-responsive target genes. Recruited to promoters via its interaction with BAZ1B/WSTF which mediates the interaction with acetylated histones, an essential step for VDR-promoter association. Plays a central role in calcium homeostasis. This is Vitamin D3 receptor A (vdra) from Danio rerio (Zebrafish).